A 144-amino-acid polypeptide reads, in one-letter code: MWLQSLLLLGTVACSISAPARSPSPSTQPWEHVNAIQEARRLLNLSRDTAAEMNETVEVISEMFDLQEPTCLQTRLELYKQGLRGSLTKLKGPLTMMASHYKQHCPPTPETSCATQIITFESFKENLKDFLLVIPFDCWEPVQE.

Residues 1–17 (MWLQSLLLLGTVACSIS) form the signal peptide. O-linked (GalNAc...) serine glycosylation is found at serine 22, serine 24, and serine 26. O-linked (GalNAc...) threonine; partial glycosylation occurs at threonine 27. Residues asparagine 44 and asparagine 54 are each glycosylated (N-linked (GlcNAc...) asparagine). Disulfide bonds link cysteine 71–cysteine 113 and cysteine 105–cysteine 138.

Belongs to the GM-CSF family. As to quaternary structure, monomer. The signaling GM-CSF receptor complex is a dodecamer of two head-to-head hexamers of two alpha, two beta, and two ligand subunits.

It is found in the secreted. Functionally, cytokine that stimulates the growth and differentiation of hematopoietic precursor cells from various lineages, including granulocytes, macrophages, eosinophils and erythrocytes. The chain is Granulocyte-macrophage colony-stimulating factor (CSF2) from Homo sapiens (Human).